The chain runs to 246 residues: 5-oxoprolinase subunit A (246 aa).

Belongs to the LamB/PxpA family. As to quaternary structure, forms a complex composed of PxpA, PxpB and PxpC.

It catalyses the reaction 5-oxo-L-proline + ATP + 2 H2O = L-glutamate + ADP + phosphate + H(+). Catalyzes the cleavage of 5-oxoproline to form L-glutamate coupled to the hydrolysis of ATP to ADP and inorganic phosphate. The sequence is that of 5-oxoprolinase subunit A from Cupriavidus necator (strain ATCC 17699 / DSM 428 / KCTC 22496 / NCIMB 10442 / H16 / Stanier 337) (Ralstonia eutropha).